The sequence spans 138 residues: UPF0201 protein TK1335 (138 aa).

The protein belongs to the UPF0201 family.

The sequence is that of UPF0201 protein TK1335 from Thermococcus kodakarensis (strain ATCC BAA-918 / JCM 12380 / KOD1) (Pyrococcus kodakaraensis (strain KOD1)).